Consider the following 334-residue polypeptide: N-acetyl-gamma-glutamyl-phosphate reductase (334 aa).

Residue C154 is part of the active site.

This sequence belongs to the NAGSA dehydrogenase family. Type 1 subfamily.

The protein localises to the cytoplasm. The catalysed reaction is N-acetyl-L-glutamate 5-semialdehyde + phosphate + NADP(+) = N-acetyl-L-glutamyl 5-phosphate + NADPH + H(+). Its pathway is amino-acid biosynthesis; L-arginine biosynthesis; N(2)-acetyl-L-ornithine from L-glutamate: step 3/4. Its function is as follows. Catalyzes the NADPH-dependent reduction of N-acetyl-5-glutamyl phosphate to yield N-acetyl-L-glutamate 5-semialdehyde. This chain is N-acetyl-gamma-glutamyl-phosphate reductase, found in Buchnera aphidicola subsp. Schizaphis graminum (strain Sg).